Reading from the N-terminus, the 314-residue chain is Basic endochitinase (314 aa).

The signal sequence occupies residues 1–20 (MGLWALVAFCLLSLILVGSA). The region spanning 21–61 (EQCGGQAGGRVCPGGACCSKFGWCGNTADYCGSGCQSQCSS) is the Chitin-binding type-1 domain. 7 disulfide bridges follow: Cys-23–Cys-38, Cys-32–Cys-44, Cys-37–Cys-51, Cys-55–Cys-59, Cys-86–Cys-148, Cys-160–Cys-168, and Cys-267–Cys-299. The active-site Proton donor is Glu-130.

It belongs to the glycosyl hydrolase 19 family. Chitinase class I subfamily.

The catalysed reaction is Random endo-hydrolysis of N-acetyl-beta-D-glucosaminide (1-&gt;4)-beta-linkages in chitin and chitodextrins.. In terms of biological role, defense against chitin-containing fungal pathogens. This is Basic endochitinase (CHIT1B) from Vitis vinifera (Grape).